The chain runs to 61 residues: Small ribosomal subunit protein uS14 (61 aa).

Residues Cys24, Cys27, Cys40, and Cys43 each contribute to the Zn(2+) site.

The protein belongs to the universal ribosomal protein uS14 family. Zinc-binding uS14 subfamily. As to quaternary structure, part of the 30S ribosomal subunit. Contacts proteins S3 and S10. The cofactor is Zn(2+).

In terms of biological role, binds 16S rRNA, required for the assembly of 30S particles and may also be responsible for determining the conformation of the 16S rRNA at the A site. The chain is Small ribosomal subunit protein uS14 from Geotalea uraniireducens (strain Rf4) (Geobacter uraniireducens).